An 856-amino-acid polypeptide reads, in one-letter code: Leucine--tRNA ligase (856 aa).

The 'HIGH' region signature appears at 53–63; it reads PYPSGNLHMGH. The 'KMSKS' region motif lies at 622–626; sequence KMSKS. Residue K625 coordinates ATP.

It belongs to the class-I aminoacyl-tRNA synthetase family.

The protein resides in the cytoplasm. The catalysed reaction is tRNA(Leu) + L-leucine + ATP = L-leucyl-tRNA(Leu) + AMP + diphosphate. The polypeptide is Leucine--tRNA ligase (Prochlorococcus marinus (strain MIT 9301)).